The following is a 234-amino-acid chain: MNNIDQTELDKFEKMAATWWDPNGSFKPIHLLNPLRLDYIQQKANGLFGKKVLDVGCGGGILSEAMARAGATVTGIDMTTEPLEVARKHAEENGLSIDYRQTTIEDFVQNQTACHAEKFDVITCMEMLEHVPDPLSIIQSCKALLKPDGVLFFSTINRTLKAYMLVIIGAEYVLKMLPKGTHEFEKFIKPAELLNWCDMADLRCQEMKGYHFNPVTEKFWLNNDVSCNYIAMLK.

Residues Arg36, Gly56, Asp77, and Met125 each contribute to the S-adenosyl-L-methionine site.

The protein belongs to the methyltransferase superfamily. UbiG/COQ3 family.

The catalysed reaction is a 3-demethylubiquinol + S-adenosyl-L-methionine = a ubiquinol + S-adenosyl-L-homocysteine + H(+). It catalyses the reaction a 3-(all-trans-polyprenyl)benzene-1,2-diol + S-adenosyl-L-methionine = a 2-methoxy-6-(all-trans-polyprenyl)phenol + S-adenosyl-L-homocysteine + H(+). Its pathway is cofactor biosynthesis; ubiquinone biosynthesis. O-methyltransferase that catalyzes the 2 O-methylation steps in the ubiquinone biosynthetic pathway. This is Ubiquinone biosynthesis O-methyltransferase from Actinobacillus pleuropneumoniae serotype 5b (strain L20).